Here is a 622-residue protein sequence, read N- to C-terminus: Palmitoyltransferase ZDHHC17 (622 aa).

Residues 1–294 (MADGPDEYDT…LKADKEFRQK (294 aa)) are Cytoplasmic-facing. The tract at residues 1 to 295 (MADGPDEYDT…KADKEFRQKV (295 aa)) is necessary and sufficient for interaction with DNAJC5 and SNAP25. ANK repeat units lie at residues 41-76 (THVD…VRQP), 79-108 (ENVT…IVDQ), 113-142 (LNST…DPSL), 146-175 (EGCS…DVDM), 179-209 (NGMT…SVNL), 214-243 (HKNT…NVDA), and 247-276 (KGES…AKGY). Transmembrane regions (helical) follow at residues 295 to 315 (VMLG…DLNI) and 316 to 336 (DSWL…QFLS). At 337–347 (KSFFDHSMHSA) the chain is on the lumenal side. The chain crosses the membrane as a helical span at residues 348–368 (LPLGIYLATKFWMYVTWFFWF). Residues 369–371 (WND) lie on the Cytoplasmic side of the membrane. A helical transmembrane segment spans residues 372–392 (LSFLSIHLPFLANSVALFYNF). Topologically, residues 393-470 (GKSWKSDPGI…GNCVGAGNHR (78 aa)) are lumenal. One can recognise a DHHC domain in the interval 427-477 (IFCSTCLIRKPVRSKHCGVCNRCIAKFDHHCPWVGNCVGAGNHRYFMGYLF). C457 (S-palmitoyl cysteine intermediate) is an active-site residue. Residues 471–491 (YFMGYLFFLLFMICWMIYGCV) form a helical membrane-spanning segment. Residues 492 to 506 (SYWGLHCETTYTKDG) lie on the Cytoplasmic side of the membrane. Residues 507–526 (FWTYITQIATCSPWMFWMFL) traverse the membrane as a helical segment. Over 527–529 (NSV) the chain is Lumenal. A helical transmembrane segment spans residues 530–552 (FHFMWVAVLLMCQMYQITCLGIT). At 553 to 622 (TNERMNARRY…QISGSGYQLV (70 aa)) the chain is on the cytoplasmic side.

It belongs to the DHHC palmitoyltransferase family. AKR/ZDHHC17 subfamily. Interacts (via ANK repeats) with numerous proteins (via the consensus sequence motif [VIAP]-[VIT]-x-x-Q-P). Interacts (via ANK repeats) with CLIP3. Interacts (via ANK repeats) with HTT. Interacts (via ANK repeats) with DNAJC5 (via C-terminus). Interacts (via ANK repeats) with MAP6. Interacts (via ANK repeats) with SNAP23. Interacts (via ANK repeats) with SNAP25. Interacts (via ANK repeats) with EVL. Interacts with SPRED1 and SPRED3. Interacts with GPM6A and OPTN. May interact (via ANK repeats) with SPRED2. May interact with NTRK1; may regulate its localization and function. Autopalmitoylated. Autopalmitoylation has a regulatory role in ZDHHC17-mediated Mg(2+) transport.

The protein resides in the golgi apparatus membrane. Its subcellular location is the cytoplasmic vesicle membrane. The protein localises to the presynaptic cell membrane. It catalyses the reaction L-cysteinyl-[protein] + hexadecanoyl-CoA = S-hexadecanoyl-L-cysteinyl-[protein] + CoA. The catalysed reaction is L-cysteinyl-[protein] + tetradecanoyl-CoA = S-tetradecanoyl-L-cysteinyl-[protein] + CoA. The enzyme catalyses L-cysteinyl-[protein] + octadecanoyl-CoA = S-octadecanoyl-L-cysteinyl-[protein] + CoA. In terms of biological role, palmitoyltransferase that catalyzes the addition of palmitate onto various protein substrates and is involved in a variety of cellular processes. Has no stringent fatty acid selectivity and in addition to palmitate can also transfer onto target proteins myristate from tetradecanoyl-CoA and stearate from octadecanoyl-CoA. Palmitoyltransferase specific for a subset of neuronal proteins, including SNAP25, DLG4/PSD95, GAD2, SYT1 and HTT. Also palmitoylates neuronal protein GPM6A as well as SPRED1 and SPRED3. Could also play a role in axonogenesis through the regulation of NTRK1 and the downstream ERK1/ERK2 signaling cascade. May be involved in the sorting or targeting of critical proteins involved in the initiating events of endocytosis at the plasma membrane. May play a role in Mg(2+) transport. Could also palmitoylate DNAJC5 and regulate its localization to the Golgi membrane. Palmitoylates CASP6, thereby preventing its dimerization and subsequent activation. The polypeptide is Palmitoyltransferase ZDHHC17 (Rattus norvegicus (Rat)).